The chain runs to 175 residues: Translation initiation factor IF-3 (175 aa).

This sequence belongs to the IF-3 family. In terms of assembly, monomer.

It localises to the cytoplasm. IF-3 binds to the 30S ribosomal subunit and shifts the equilibrium between 70S ribosomes and their 50S and 30S subunits in favor of the free subunits, thus enhancing the availability of 30S subunits on which protein synthesis initiation begins. The chain is Translation initiation factor IF-3 from Staphylococcus saprophyticus subsp. saprophyticus (strain ATCC 15305 / DSM 20229 / NCIMB 8711 / NCTC 7292 / S-41).